Here is a 204-residue protein sequence, read N- to C-terminus: Oocyte-specific homeobox protein 1 (204 aa).

Residues 28–73 (EPARNLAFQMRQSPLVTPGSTTKSSLSVPERNLLKQESQGPSRQSG) form a disordered region. Polar residues-rich tracts occupy residues 37 to 54 (MRQS…SSLS) and 62 to 72 (KQESQGPSRQS). The segment at residues 94-153 (FRKERTVYTKEQQGLLQKHFDECQYPNKKKIVELALSVGVTKREIKIWFKNNRAKYRRMN) is a DNA-binding region (homeobox).

It belongs to the paired homeobox family. Obox subfamily. In terms of tissue distribution, specifically expressed in oocytes and early embryos.

Its subcellular location is the nucleus. Functionally, transcription factor required for zygotic genome activation (ZGA), a critical event in early embryonic development during which the developmental control passes from maternally provided mRNAs to the expression of the zygotic genome after fertilization. Together with other Obox family members, required in early two-cell stage embryos to kick-start the major ZGA wave by facilitating RNA Polymerase II 'pre-configuration', during which RNA Polymerase II relocates from the initial one-cell stage binding targets to ZGA gene promoters and distal enhancers. Mechanistically, promotes recruitment of RNA Polymerase II from (CG-rich) non-ZGA genes to (CG-poor) ZGA genes at the two-cell stage. Binds to regulatory DNA sequences containing a 5'-ACNCCTTTAATCCCAG-3' sequence motif. Most maternal and zygotic Obox family proteins can compensate for one another. In addition to its role in ZGA, promotes embryonic stem cell pluripotency. The polypeptide is Oocyte-specific homeobox protein 1 (Mus musculus (Mouse)).